Reading from the N-terminus, the 598-residue chain is Fibulin-1 (598 aa).

31 cysteine pairs are disulfide-bonded: Ala-1/Cys-25, Cys-7/Cys-26, Cys-28/Cys-52, Cys-29/Cys-59, Cys-42/Cys-60, Cys-96/Cys-106, Cys-102/Cys-115, Cys-117/Cys-130, Cys-136/Cys-149, Cys-143/Cys-158, Cys-164/Cys-176, Cys-182/Cys-195, Cys-189/Cys-204, Cys-210/Cys-222, Cys-228/Cys-242, Cys-257/Cys-270, Cys-275/Cys-288, Cys-282/Cys-297, Cys-299/Cys-312, Cys-318/Cys-330, Cys-326/Cys-339, Cys-341/Cys-354, Cys-360/Cys-369, Cys-365/Cys-378, Cys-380/Cys-394, Cys-400/Cys-413, Cys-409/Cys-422, Cys-424/Cys-438, Cys-444/Cys-457, Cys-451/Cys-466, and Cys-471/Cys-483. Anaphylatoxin-like domains follow at residues 1–27 (ANEQ…RCCH) and 28–60 (CCLL…RACC). Asn-14 carries N-linked (GlcNAc...) asparagine glycosylation. Residues 92–131 (LNDRCRGGGPCKQQCRDTGDEVVCSCFVGYQLLSDGVSCE) enclose the EGF-like 1 domain. The EGF-like 2; calcium-binding domain maps to 132–177 (DVNECITGSHSCRLGESCINTVGSFRCQRDSSCGTGYELTEDNSCK). In terms of domain architecture, EGF-like 3; calcium-binding spans 178-223 (DIDQCESGIHNCLPDFICQNTLGSFRCRPKLQCKNGFIQDALANCI). The 47-residue stretch at 224–270 (DINECLSIVSAPCPTGHTCINTEGSYTQKNVPNCGRGYHLNEEGTRC) folds into the EGF-like 4; calcium-binding domain. Residues 271-313 (DVNECAPPAEPCGKGHRCVNSPGSFRCECKTGYYFDGISRMCV) form the EGF-like 5; calcium-binding domain. A self-association and FN1-binding region spans residues 271-355 (DVNECAPPAE…RLSVDGRSCE (85 aa)). Residues 314–355 (DVNECQRYPGRLCGHKCENTLGSYVCSCSVGFRLSVDGRSCE) form the EGF-like 6; calcium-binding domain. The region spanning 356 to 395 (DINECSSSPCSQECANVYGSYQCYCRRGYQLSDVDGVTCE) is the EGF-like 7; calcium-binding domain. In terms of domain architecture, EGF-like 8; calcium-binding spans 396 to 439 (DIDECALPTGGHICSYRCINIPGSFQCSCPASGYRLAPNGRNCQ). An EGF-like 9; calcium-binding domain is found at 440–484 (DIDECVTGIHNCSINETCFNIQGGFRCLAFECPENYRRSAATRCE). Residues Asn-450 and Asn-454 are each glycosylated (N-linked (GlcNAc...) asparagine).

This sequence belongs to the fibulin family. As to quaternary structure, homomultimerizes and interacts with various extracellular matrix components. Interacts with FBLN7. Interacts with the mature/soluble form of DTR. Interacts with CCN3.

It is found in the secreted. The protein resides in the extracellular space. It localises to the extracellular matrix. Its function is as follows. Incorporated into fibronectin-containing matrix fibers. May play a role in cell adhesion and migration along protein fibers within the extracellular matrix (ECM). Could be important for certain developmental processes and contribute to the supramolecular organization of ECM architecture, in particular to those of basement membranes. May serve to anchor the mature/soluble form of DTR to its fibers as it migrates through the extracellular matrix. The direct physical association with DTR may be useful in such tissue developmental processes as wound healing. This is Fibulin-1 (FBLN1) from Chlorocebus aethiops (Green monkey).